A 296-amino-acid polypeptide reads, in one-letter code: 4-hydroxybenzoate octaprenyltransferase (296 aa).

9 helical membrane-spanning segments follow: residues 29 to 49 (IGIYLLLWPTLWALWVAAEGV), 55 to 75 (LFIFVFGVILMRAAGCVINDY), 102 to 122 (ALVLFAVLVTASFVLVLFTNA), 124 to 141 (TIWLSFGGLALAACYPFM), 146 to 166 (FYPQVVLGAAFSWGMPMAFTA), 169 to 189 (GSLPPEAWLLYIANLLWTVAY), 216 to 236 (ADRLIIASLQGLALLCLLLAG), 239 to 259 (FELGVWFHAGLLVAAACFVWE), and 271 to 291 (CFNAFLHNHWAGLAIFVGIVL).

This sequence belongs to the UbiA prenyltransferase family. It depends on Mg(2+) as a cofactor.

It localises to the cell inner membrane. The enzyme catalyses all-trans-octaprenyl diphosphate + 4-hydroxybenzoate = 4-hydroxy-3-(all-trans-octaprenyl)benzoate + diphosphate. Its pathway is cofactor biosynthesis; ubiquinone biosynthesis. In terms of biological role, catalyzes the prenylation of para-hydroxybenzoate (PHB) with an all-trans polyprenyl group. Mediates the second step in the final reaction sequence of ubiquinone-8 (UQ-8) biosynthesis, which is the condensation of the polyisoprenoid side chain with PHB, generating the first membrane-bound Q intermediate 3-octaprenyl-4-hydroxybenzoate. The sequence is that of 4-hydroxybenzoate octaprenyltransferase from Ectopseudomonas mendocina (strain ymp) (Pseudomonas mendocina).